A 120-amino-acid chain; its full sequence is NAD(P)H-quinone oxidoreductase subunit 3, chloroplastic (120 aa).

A run of 3 helical transmembrane segments spans residues 7 to 27 (YETFWIFLLISSLMPILAFLI), 64 to 84 (MFALVFVVFDVETVFLYPWAM), and 88 to 108 (ILGISTFIEASIFVLILIVGS).

The protein belongs to the complex I subunit 3 family. NDH is composed of at least 16 different subunits, 5 of which are encoded in the nucleus.

The protein resides in the plastid. It is found in the chloroplast thylakoid membrane. The catalysed reaction is a plastoquinone + NADH + (n+1) H(+)(in) = a plastoquinol + NAD(+) + n H(+)(out). It carries out the reaction a plastoquinone + NADPH + (n+1) H(+)(in) = a plastoquinol + NADP(+) + n H(+)(out). In terms of biological role, NDH shuttles electrons from NAD(P)H:plastoquinone, via FMN and iron-sulfur (Fe-S) centers, to quinones in the photosynthetic chain and possibly in a chloroplast respiratory chain. The immediate electron acceptor for the enzyme in this species is believed to be plastoquinone. Couples the redox reaction to proton translocation, and thus conserves the redox energy in a proton gradient. The protein is NAD(P)H-quinone oxidoreductase subunit 3, chloroplastic of Cycas taitungensis (Prince sago).